A 430-amino-acid chain; its full sequence is Nitroalkane oxidase (430 aa).

FAD-binding positions include 132–135, 140–142, 170–172, Arg-301, Gln-311, 372–376, and 397–401; these read LVFS, VAN, WAT, NAVGI, and IFDGG. Asp-399 functions as the Proton acceptor in the catalytic mechanism.

Belongs to the acyl-CoA dehydrogenase family. Homotetramer. Requires FAD as cofactor.

It carries out the reaction a primary nitroalkane + O2 + H2O = an aldehyde + nitrite + H2O2 + H(+). The enzyme catalyses a secondary nitroalkane + O2 + H2O = a ketone + nitrite + H2O2 + H(+). Its function is as follows. Nitroalkane oxidase (NAO) catalyzes the oxidation of nitroalkanes to the corresponding aldehydes or ketones with the release of nitrite and the consumption of molecular oxygen to yield hydrogen peroxide. NAO is unusual, since it catalyzes substrate oxidation by removing a substrate proton to form a carbanion intermediate. Prefers longer nitroalkanes, with 1-nitrohexane having the highest activity. This is Nitroalkane oxidase from Podospora anserina (strain S / ATCC MYA-4624 / DSM 980 / FGSC 10383) (Pleurage anserina).